Here is a 63-residue protein sequence, read N- to C-terminus: U-reduvitoxin-Pr9a (63 aa).

The first 19 residues, 1–19, serve as a signal peptide directing secretion; the sequence is MRFFSLFTFLVAFIAAALA. A propeptide spanning residues 20 to 42 is cleaved from the precursor; it reads APVEIGEDLFALRPTGAKRDIIL. An intrachain disulfide couples Cys-47 to Cys-60.

Expressed by the venom gland.

The protein resides in the secreted. This chain is U-reduvitoxin-Pr9a, found in Platymeris rhadamanthus (Red spot assassin bug).